Reading from the N-terminus, the 145-residue chain is 3-dehydroquinate dehydratase 1 (145 aa).

Y24 acts as the Proton acceptor in catalysis. Residues N75, H81, and D88 each coordinate substrate. Catalysis depends on H101, which acts as the Proton donor. Substrate-binding positions include 102–103 (IS) and R112.

This sequence belongs to the type-II 3-dehydroquinase family. As to quaternary structure, homododecamer.

It catalyses the reaction 3-dehydroquinate = 3-dehydroshikimate + H2O. It participates in metabolic intermediate biosynthesis; chorismate biosynthesis; chorismate from D-erythrose 4-phosphate and phosphoenolpyruvate: step 3/7. Functionally, catalyzes a trans-dehydration via an enolate intermediate. The sequence is that of 3-dehydroquinate dehydratase 1 (aroQ1) from Agrobacterium fabrum (strain C58 / ATCC 33970) (Agrobacterium tumefaciens (strain C58)).